A 117-amino-acid polypeptide reads, in one-letter code: MKGKKYYSDYHVWIEPIHSRIVKLGLSSQMREHLGNILHIDLPSLGAFIKEGEKLCILESSKSAIEVLSPVSGEVLEVNTALEDDILPVNNATESEGWFVVLQLTEDFRSESFSLEP.

Residues 21-103 (IVKLGLSSQM…ESEGWFVVLQ (83 aa)) form the Lipoyl-binding domain. Lys62 bears the N6-lipoyllysine mark.

It belongs to the GcvH family. It depends on (R)-lipoate as a cofactor.

The sequence is that of Glycine cleavage system H-like protein from Chlamydia trachomatis serovar D (strain ATCC VR-885 / DSM 19411 / UW-3/Cx).